A 288-amino-acid polypeptide reads, in one-letter code: Thymidylate synthase (288 aa).

DUMP contacts are provided by residues R21 and 150-151; that span reads RR. Residue C170 is the Nucleophile of the active site. DUMP contacts are provided by residues 191–194, N202, and 232–234; these read RSGD and HIY. D194 contacts (6R)-5,10-methylene-5,6,7,8-tetrahydrofolate. A287 lines the (6R)-5,10-methylene-5,6,7,8-tetrahydrofolate pocket.

This sequence belongs to the thymidylate synthase family. Bacterial-type ThyA subfamily. As to quaternary structure, homodimer.

The protein localises to the cytoplasm. The catalysed reaction is dUMP + (6R)-5,10-methylene-5,6,7,8-tetrahydrofolate = 7,8-dihydrofolate + dTMP. The protein operates within pyrimidine metabolism; dTTP biosynthesis. In terms of biological role, catalyzes the reductive methylation of 2'-deoxyuridine-5'-monophosphate (dUMP) to 2'-deoxythymidine-5'-monophosphate (dTMP) while utilizing 5,10-methylenetetrahydrofolate (mTHF) as the methyl donor and reductant in the reaction, yielding dihydrofolate (DHF) as a by-product. This enzymatic reaction provides an intracellular de novo source of dTMP, an essential precursor for DNA biosynthesis. This Mesoplasma florum (strain ATCC 33453 / NBRC 100688 / NCTC 11704 / L1) (Acholeplasma florum) protein is Thymidylate synthase.